Here is a 411-residue protein sequence, read N- to C-terminus: Multidrug resistance protein MdtG (411 aa).

Helical transmembrane passes span 14–34 (LFVA…IMPF), 56–76 (LVFS…GGLA), 89–109 (ALGM…WQFL), 113–133 (AVLG…ATQV), 144–164 (TLST…GLLA), 171–191 (PVFY…LLYV), 219–239 (ILSL…IAPI), 254–274 (LAFV…MSAP), 288–308 (ILVF…FVQT), and 376–396 (AVFC…WWCL).

The protein belongs to the major facilitator superfamily. DHA1 family. MdtG (TC 2.A.1.2.20) subfamily.

It localises to the cell inner membrane. The sequence is that of Multidrug resistance protein MdtG from Serratia proteamaculans (strain 568).